The primary structure comprises 294 residues: Diaminopimelate epimerase (294 aa).

The substrate site is built by Asn-11 and Asn-78. The active-site Proton donor is the Cys-87. Residues 88–89, Asn-167, Asn-203, and 221–222 each bind substrate; these read GN and ER. Residue Cys-230 is the Proton acceptor of the active site. 231–232 is a substrate binding site; that stretch reads GT.

The protein belongs to the diaminopimelate epimerase family. In terms of assembly, homodimer.

It localises to the cytoplasm. The enzyme catalyses (2S,6S)-2,6-diaminopimelate = meso-2,6-diaminopimelate. It participates in amino-acid biosynthesis; L-lysine biosynthesis via DAP pathway; DL-2,6-diaminopimelate from LL-2,6-diaminopimelate: step 1/1. Functionally, catalyzes the stereoinversion of LL-2,6-diaminopimelate (L,L-DAP) to meso-diaminopimelate (meso-DAP), a precursor of L-lysine and an essential component of the bacterial peptidoglycan. The polypeptide is Diaminopimelate epimerase (Mycolicibacterium paratuberculosis (strain ATCC BAA-968 / K-10) (Mycobacterium paratuberculosis)).